The following is a 215-amino-acid chain: Probable nicotinate-nucleotide adenylyltransferase (215 aa).

This sequence belongs to the NadD family.

The enzyme catalyses nicotinate beta-D-ribonucleotide + ATP + H(+) = deamido-NAD(+) + diphosphate. It participates in cofactor biosynthesis; NAD(+) biosynthesis; deamido-NAD(+) from nicotinate D-ribonucleotide: step 1/1. Functionally, catalyzes the reversible adenylation of nicotinate mononucleotide (NaMN) to nicotinic acid adenine dinucleotide (NaAD). This Gluconacetobacter diazotrophicus (strain ATCC 49037 / DSM 5601 / CCUG 37298 / CIP 103539 / LMG 7603 / PAl5) protein is Probable nicotinate-nucleotide adenylyltransferase.